A 304-amino-acid chain; its full sequence is Non-specific ribonucleoside hydrolase RihC (304 aa).

Residue H233 is part of the active site.

It belongs to the IUNH family. RihC subfamily.

In terms of biological role, hydrolyzes both purine and pyrimidine ribonucleosides with a broad-substrate specificity. In Escherichia coli (strain SMS-3-5 / SECEC), this protein is Non-specific ribonucleoside hydrolase RihC.